An 87-amino-acid polypeptide reads, in one-letter code: Small ribosomal subunit protein eS21 (87 aa).

The protein belongs to the eukaryotic ribosomal protein eS21 family. As to quaternary structure, component of the small ribosomal subunit. Mature ribosomes consist of a small (40S) and a large (60S) subunit. The 40S subunit contains about 33 different proteins and 1 molecule of RNA (18S). The 60S subunit contains about 49 different proteins and 3 molecules of RNA (25S, 5.8S and 5S).

It is found in the cytoplasm. Required for the processing of the 20S rRNA-precursor to mature 18S rRNA in a late step of the maturation of 40S ribosomal subunits. Has a physiological role leading to 18S rRNA stability. This chain is Small ribosomal subunit protein eS21 (RPS21), found in Eremothecium gossypii (strain ATCC 10895 / CBS 109.51 / FGSC 9923 / NRRL Y-1056) (Yeast).